Reading from the N-terminus, the 201-residue chain is Charged multivesicular body protein 6 (201 aa).

The N-myristoyl glycine moiety is linked to residue Gly-2. Residues 10 to 145 (QSRVTEQDKA…YQRQIDELLA (136 aa)) adopt a coiled-coil conformation. At Ser-119 the chain carries Phosphoserine. Thr-130 carries the post-translational modification Phosphothreonine. Residues 168 to 179 (IELPEVPSEPLP) carry the Type-2 MIT-interacting motif motif. Positions 171 to 201 (PEVPSEPLPEKIPEDVPVKARPRQAELVAAS) are disordered. The span at 178 to 188 (LPEKIPEDVPV) shows a compositional bias: basic and acidic residues.

This sequence belongs to the SNF7 family. As to quaternary structure, probable core component of the endosomal sorting required for transport complex III (ESCRT-III). ESCRT-III components are thought to multimerize to form a flat lattice on the perimeter membrane of the endosome. Several assembly forms of ESCRT-III may exist that interact and act sequentially. Interacts with VPS4A; the interaction is direct. Interacts with VPS4B; the interaction is direct. Interacts with CHMP4A, CHMP4B and CHMP4C. Interacts with SNF8, VPS25 and VPS36. Post-translationally, ISGylated in a CHMP5-dependent manner. Isgylation weakens its interaction with VPS4A.

It is found in the endomembrane system. It localises to the endosome membrane. Its subcellular location is the late endosome membrane. The protein localises to the membrane. Its function is as follows. Probable core component of the endosomal sorting required for transport complex III (ESCRT-III) which is involved in multivesicular bodies (MVBs) formation and sorting of endosomal cargo proteins into MVBs. MVBs contain intraluminal vesicles (ILVs) that are generated by invagination and scission from the limiting membrane of the endosome and mostly are delivered to lysosomes enabling degradation of membrane proteins, such as stimulated growth factor receptors, lysosomal enzymes and lipids. The MVB pathway appears to require the sequential function of ESCRT-O, -I,-II and -III complexes. ESCRT-III proteins mostly dissociate from the invaginating membrane before the ILV is released. The ESCRT machinery also functions in topologically equivalent membrane fission events, such as the terminal stages of cytokinesis and the budding of enveloped viruses (lentiviruses). ESCRT-III proteins are believed to mediate the necessary vesicle extrusion and/or membrane fission activities, possibly in conjunction with the AAA ATPase VPS4. In the ESCRT-III complex, it probably serves as an acceptor for the ESCRT-II complex on endosomal membrane. This Pongo abelii (Sumatran orangutan) protein is Charged multivesicular body protein 6 (CHMP6).